The sequence spans 29 residues: Alpha-amylase inhibitor 2 (29 aa).

Belongs to the protease inhibitor I6 (cereal trypsin/alpha-amylase inhibitor) family.

The protein localises to the secreted. Functionally, alpha-amylase inhibitor. The sequence is that of Alpha-amylase inhibitor 2 from Saussurea costus (Costus).